The primary structure comprises 260 residues: MTETIATIKEKLASLADPHDARLLTWRQDKRCGVQKAIALWEKRLALARKKQADFNQRFNFERDYWLKGVELVAGVDEVGRGPLAGPVVAAAVILPHDFNIVDVIDSKQVAQHKREQLYEIILDQAVSIGIGSVDAKTIDEINIYEAARQAMTEAINNLAPQPQALLIDAMQVYLDITQQSLIKGDARSNSIGAASIVAKVIRDKMMTDYDKVYPGYDFAQNAGYGTKKHLAGIDKLGVTPIHRRSFQPVHDAIVNKKNC.

The RNase H type-2 domain occupies E71–N259. D77, E78, and D169 together coordinate a divalent metal cation.

It belongs to the RNase HII family. Mn(2+) serves as cofactor. Mg(2+) is required as a cofactor.

Its subcellular location is the cytoplasm. It carries out the reaction Endonucleolytic cleavage to 5'-phosphomonoester.. Endonuclease that specifically degrades the RNA of RNA-DNA hybrids. This Leuconostoc citreum (strain KM20) protein is Ribonuclease HII.